Reading from the N-terminus, the 89-residue chain is Small ribosomal subunit protein uS15 (89 aa).

It belongs to the universal ribosomal protein uS15 family. Part of the 30S ribosomal subunit. Forms a bridge to the 50S subunit in the 70S ribosome, contacting the 23S rRNA.

Functionally, one of the primary rRNA binding proteins, it binds directly to 16S rRNA where it helps nucleate assembly of the platform of the 30S subunit by binding and bridging several RNA helices of the 16S rRNA. Its function is as follows. Forms an intersubunit bridge (bridge B4) with the 23S rRNA of the 50S subunit in the ribosome. The sequence is that of Small ribosomal subunit protein uS15 from Roseiflexus sp. (strain RS-1).